Here is a 295-residue protein sequence, read N- to C-terminus: Acetaldehyde dehydrogenase 2 (295 aa).

17–20 (TGNI) lines the NAD(+) pocket. Catalysis depends on Cys132, which acts as the Acyl-thioester intermediate. NAD(+) is bound by residues 164–172 (SVGPASRAN) and Asn275.

Belongs to the acetaldehyde dehydrogenase family.

The catalysed reaction is acetaldehyde + NAD(+) + CoA = acetyl-CoA + NADH + H(+). This is Acetaldehyde dehydrogenase 2 from Salinispora arenicola (strain CNS-205).